The following is a 347-amino-acid chain: GMP reductase (347 aa).

Position 108–131 (108–131) interacts with NADP(+); the sequence is ADFEKTKQILDLNSALNFVCIDVA. Residues Gly-181 and Gly-183 each contribute to the K(+) site. The Thioimidate intermediate role is filled by Cys-186. 216 to 239 lines the NADP(+) pocket; sequence IVSDGGCTTPGDVAKAFGGGADFV.

This sequence belongs to the IMPDH/GMPR family. GuaC type 1 subfamily. Homotetramer.

It carries out the reaction IMP + NH4(+) + NADP(+) = GMP + NADPH + 2 H(+). Functionally, catalyzes the irreversible NADPH-dependent deamination of GMP to IMP. It functions in the conversion of nucleobase, nucleoside and nucleotide derivatives of G to A nucleotides, and in maintaining the intracellular balance of A and G nucleotides. This Escherichia coli O81 (strain ED1a) protein is GMP reductase.